The primary structure comprises 870 residues: DNA mismatch repair protein MutS (870 aa).

Gly622 to Ser629 provides a ligand contact to ATP.

Belongs to the DNA mismatch repair MutS family.

Its function is as follows. This protein is involved in the repair of mismatches in DNA. It is possible that it carries out the mismatch recognition step. This protein has a weak ATPase activity. This chain is DNA mismatch repair protein MutS, found in Methylibium petroleiphilum (strain ATCC BAA-1232 / LMG 22953 / PM1).